Reading from the N-terminus, the 80-residue chain is MEKIPIRPFSDPASIISLCRCTLENSNAPLSLLCSATNKFILSARDSADLNEKGDFMNIFKPISYIASLAPREVTLLALV.

The protein is Protein YibX of Escherichia coli (strain K12).